Here is a 482-residue protein sequence, read N- to C-terminus: Nuclear transcription factor Y subunit nfya-1 (482 aa).

Residues 1–160 (MNGASRGDVQ…NGSYIQYNEP (160 aa)) form a disordered region. Polar residues predominate over residues 72–93 (SSPNVQTQCHQPPVVRSQTHQA). Positions 94–110 (SVSQTTPTQTTPSQYTP) are enriched in low complexity. Composition is skewed to polar residues over residues 126–135 (HVTPSQQQRI) and 144–160 (VSQSQPQNGSYIQYNEP). The short motif at 306-329 (LVNPKQFNRIMRRREMRQQLEASG) is the Subunit association domain (SAD) element. Residues 336–361 (QKYLHESRHLHALKRKRGLDGRFDNT) constitute a DNA-binding region (NFYA/HAP2-type). The segment at 344 to 414 (HLHALKRKRG…QPKGGIVNSS (71 aa)) is disordered. The span at 353–362 (GLDGRFDNTK) shows a compositional bias: basic and acidic residues. Residues 363–375 (TAESSSMVSSTTS) are compositionally biased toward low complexity.

Belongs to the NFYA/HAP2 subunit family. Forms a heterotrimeric transcription factor complex (nfya-1-NF-Y complex) composed of nfya-1, nfyb-1 and nfyc-1, which binds to 5'-CCAAT-3' box motif in the promoters of its target genes. Interacts with the nfyb-1 and nfyc-1 dimer; the interaction is required for subsequent binding to the 5'-CCAAT-3' box motif in DNA. Does not interact with either nfyb-1 or nfyc-1 in their monomeric form. Interacts with mes-3. Expressed in certain parts of the gonads with high expression in fertilized oocytes in the uterus and mature oocytes from the distal to the proximal arm of the gonad, but weak expression in the syncytial ovaries and immature oocytes at the beginning of the proximal arm of the gonad. Highly expressed in the head ganglia neurons and the developing hermaphrodite vulva and male tail. Weakly expressed in most somatic cells. Not expressed in the intestine, the hypodermis, body wall muscle surrounding the pseudocoelomic space, secretory cells in the pharyngeal terminal bulb wall, in the small ganglia surrounding the pharynx and in the neurons running anteriorly to the sensory organs in the head.

It is found in the nucleus. Its function is as follows. Component of the sequence-specific heterotrimeric transcription factor (nfya-1-NF-Y) which specifically recognizes a 5'-CCAAT-3' box motif found in the promoters of its target genes to regulate their expression and control cellular identity in particular tissue types. In association with the components in the nfya-1-NF-Y complex, represses the expression of the T-box transcription factor tbx-2 throughout larval development, which most likely restricts its expression to certain tissues. May act to repress txb-2 expression in conjunction with tbx-2 itself, which has an autoregulatory role. With the components in this complex, negatively regulates the expression of the homeobox protein egl-5 to spatially restrict its expression in tissues such as the head. May regulate egl-5 expression in association with the mes-2-mes-3-mes-6 complex. This chain is Nuclear transcription factor Y subunit nfya-1, found in Caenorhabditis elegans.